Consider the following 192-residue polypeptide: MKLVAGLGNPEARYENTRHNIGFEVVDELARLHQSSFSSGKGNFLYSKIIHRNEPILLLKPMTYMNLSGNAVIAAMTFYKIEYQDILVVCDDLNIALGTIRMRAKGSAGGQNGLKHIIQCLKRDDFARLRVGIAPDHPVSSYSSFVLGKFNAEERKITDRMVSLSAEAALDFVAHGVEHAMNHYNTGKKTQQ.

Residue Tyr-14 participates in tRNA binding. His-19 serves as the catalytic Proton acceptor. Residues Tyr-64, Asn-66, and Asn-112 each coordinate tRNA.

The protein belongs to the PTH family. As to quaternary structure, monomer.

The protein resides in the cytoplasm. The catalysed reaction is an N-acyl-L-alpha-aminoacyl-tRNA + H2O = an N-acyl-L-amino acid + a tRNA + H(+). In terms of biological role, hydrolyzes ribosome-free peptidyl-tRNAs (with 1 or more amino acids incorporated), which drop off the ribosome during protein synthesis, or as a result of ribosome stalling. Catalyzes the release of premature peptidyl moieties from peptidyl-tRNA molecules trapped in stalled 50S ribosomal subunits, and thus maintains levels of free tRNAs and 50S ribosomes. The sequence is that of Peptidyl-tRNA hydrolase from Prosthecochloris aestuarii (strain DSM 271 / SK 413).